The following is a 278-amino-acid chain: Inosose isomerase (278 aa).

Residues glutamate 142, aspartate 174, histidine 200, and glutamate 246 each coordinate a divalent metal cation.

This sequence belongs to the IolI family. Mn(2+) serves as cofactor. It depends on Fe(2+) as a cofactor. The cofactor is Co(2+).

The enzyme catalyses scyllo-inosose = scyllo-inosine. It functions in the pathway polyol metabolism; myo-inositol degradation into acetyl-CoA. In terms of biological role, involved in the reversible interconverion of 2-keto-myo-inositol (2KMI, inosose or 2,4,6/3,5-pentahydroxycyclohexanone) to 1-keto-D-chiro-inositol (1KDCI or 2,3,5/4,6-pentahydroxycyclohexanone). The chain is Inosose isomerase (iolI) from Bacillus subtilis (strain 168).